Here is a 142-residue protein sequence, read N- to C-terminus: Type II secretion system core protein G (142 aa).

The propeptide at 1–8 (MRRQSQRG) is leader sequence. Phenylalanine 9 carries the N-methylphenylalanine modification. The helical transmembrane segment at 9–29 (FTLLEIMVVIVIMGILASLVV) threads the bilayer. Residues 122-142 (SGQDGVPGTDDDIGNWTLSKK) are disordered.

Belongs to the GSP G family. As to quaternary structure, type II secretion system is composed of four main components: the outer membrane complex, the inner membrane complex, the cytoplasmic secretion ATPase and the periplasm-spanning pseudopilus. Forms homomultimers. In terms of processing, cleaved by the prepilin peptidase. Methylated by prepilin peptidase at the amino group of the N-terminal phenylalanine once the leader sequence is cleaved.

Its subcellular location is the cell inner membrane. Its function is as follows. Core component of the type II secretion system required for the energy-dependent secretion of extracellular factors such as proteases and toxins from the periplasm. Pseudopilin (pilin-like) protein that polymerizes to form the pseudopilus. Further polymerization triggers pseudopilus growth. The chain is Type II secretion system core protein G from Klebsiella michiganensis (strain ATCC 8724 / DSM 4798 / JCM 20051 / NBRC 3318 / NRRL B-199 / KCTC 1686 / BUCSAV 143 / CCM 1901).